A 46-amino-acid chain; its full sequence is Large ribosomal subunit protein bL36 (46 aa).

Belongs to the bacterial ribosomal protein bL36 family.

The protein is Large ribosomal subunit protein bL36 of Serratia proteamaculans (strain 568).